Reading from the N-terminus, the 235-residue chain is Pro-opiomelanocortin (235 aa).

A signal peptide spans 1–26 (MPRFCYSRSGALLLALLLQTSIDVWS). Phenylalanine 87 carries the post-translational modification Phenylalanine amide. A disordered region spans residues 88–126 (GPRNSSSAGSAAQRRAEEEAVWGDGSPEPSPREGKRSYS). Positions 90–100 (RNSSSAGSAAQ) are enriched in low complexity. Residue asparagine 91 is glycosylated (N-linked (GlcNAc...) asparagine). Positions 103-121 (AEEEAVWGDGSPEPSPREG) are excised as a propeptide. Over residues 117 to 126 (SPREGKRSYS) the composition is skewed to basic and acidic residues. The residue at position 124 (serine 124) is an N-acetylserine; in Corticotropin. Residue valine 136 is modified to Valine amide. N-linked (GlcNAc...) asparagine glycosylation is present at asparagine 152. Serine 154 is modified (phosphoserine). The tract at residues 179–210 (ESDAEKDDGPYRVEHFRWSNPPKDKRYGGFMT) is disordered. Over residues 185 to 205 (DDGPYRVEHFRWSNPPKDKRY) the composition is skewed to basic and acidic residues.

Belongs to the POMC family. In terms of processing, specific enzymatic cleavages at paired basic residues yield the different active peptides. In terms of tissue distribution, ACTH and MSH are produced by the pituitary gland.

Its subcellular location is the secreted. Stimulates the adrenal glands to release cortisol. Functionally, anorexigenic peptide. Increases the pigmentation of skin by increasing melanin production in melanocytes. Its function is as follows. Increases the pigmentation of skin by increasing melanin production in melanocytes. In terms of biological role, endogenous orexigenic opiate. Endogenous opiate. This chain is Pro-opiomelanocortin (Pomc), found in Mus musculus (Mouse).